A 371-amino-acid chain; its full sequence is MRLRSIQFENFRNHRSFSFEPEDGINLIYGQNGSGKTSILEGIHYCALTKGFVSAADGECLSFSAGYFLLTALFESSSGIETAVRLSYTKESGKKLQIDGNELKPFSLHIGSIPCISFSPPEIVIVSGPPGERRRFLDNAVCQSDRRYLDNLLIYRRLLQQRNALLQQLSQSPGKDRSMLQLWSENLASSAASVTAGRVRFLAEFHPFVELLHRDLSGGQMPSIEYRSTIGRLLEPVPESELRERFLQRFQENEQQEILRGQTLSGPHRDELIFLSDGRESKRYSSQGQQRTFLISLKLALFQYFNEKIGETPICLLDDIFSELDGKRTAAVLDILEGCGQTLISSADLKNHPGSAVHHLQTTPSTRNSEV.

Position 30 to 37 (30 to 37) interacts with ATP; the sequence is GQNGSGKT.

This sequence belongs to the RecF family.

The protein localises to the cytoplasm. The RecF protein is involved in DNA metabolism; it is required for DNA replication and normal SOS inducibility. RecF binds preferentially to single-stranded, linear DNA. It also seems to bind ATP. The polypeptide is DNA replication and repair protein RecF (Chlorobium phaeovibrioides (strain DSM 265 / 1930) (Prosthecochloris vibrioformis (strain DSM 265))).